Here is a 96-residue protein sequence, read N- to C-terminus: (4S)-4-hydroxy-5-phosphonooxypentane-2,3-dione isomerase (96 aa).

Residues 2–91 form the ABM domain; it reads HVTLVEINVH…MTGPRKKRLF (90 aa).

It belongs to the LsrG family. In terms of assembly, homodimer.

It is found in the cytoplasm. The enzyme catalyses (2S)-2-hydroxy-3,4-dioxopentyl phosphate = 3-hydroxy-2,4-dioxopentyl phosphate. Functionally, involved in the degradation of phospho-AI-2, thereby terminating induction of the lsr operon and closing the AI-2 signaling cycle. Catalyzes the conversion of (4S)-4-hydroxy-5-phosphonooxypentane-2,3-dione (P-DPD) to 3-hydroxy-5-phosphonooxypentane-2,4-dione (P-HPD). This chain is (4S)-4-hydroxy-5-phosphonooxypentane-2,3-dione isomerase, found in Shigella flexneri serotype 5b (strain 8401).